The following is a 1123-amino-acid chain: Polyprotein of EF-Ts, chloroplastic (1123 aa).

Residues 1 to 73 (MTPVVHCSVG…SSARRPRTLS (73 aa)) constitute a chloroplast transit peptide. Residues 68 to 141 (RPRTLSAATV…MPPLNDEDLV (74 aa)) form a disordered region. The segment covering 94 to 103 (TSEESSEDTA) has biased composition (acidic residues). Residues 106–119 (TAEASEQAEASTSS) are compositionally biased toward low complexity. One can recognise an S1 motif 1 domain in the interval 143–212 (GASFTGKVRS…ETGRISLTMR (70 aa)). A disordered region spans residues 213 to 258 (TGGDYVKPKTETPKAASGGRNTTATTSRGSPRQTRERDEAKSMGET). The span at 231–244 (GRNTTATTSRGSPR) shows a compositional bias: polar residues. Positions 245-254 (QTRERDEAKS) are enriched in basic and acidic residues. The S1 motif 2 domain maps to 263-331 (GQFLDGVVKN…VRGQVTLTMK (69 aa)). Disordered stretches follow at residues 443 to 670 (KTES…SEKT) and 894 to 923 (VAAQ…EEKK). Over residues 486 to 501 (EGSVTTEPTEAASTEF) the composition is skewed to polar residues. The segment covering 551–587 (SVASTESVTAVVEESAPVSSVAIEVPAPEASEASAQE) has biased composition (low complexity). The segment covering 630–639 (KPDEPEESLI) has biased composition (acidic residues). 2 stretches are compositionally biased toward low complexity: residues 657-670 (AAVP…SEKT) and 894-903 (VAAQTAAKAP). The span at 908–923 (PKDDKPEETAETEEKK) shows a compositional bias: basic and acidic residues.

This sequence belongs to the EF-Ts family. In terms of assembly, component of the chloroplast ribosome 30S and 70S subunits, as well as polysomes. Component of the chloroplast ribosome 70S subunit, and at low levels, present in polysomes. As to quaternary structure, associates transiently with chloroplast polysomes.

Its subcellular location is the plastid. The protein resides in the chloroplast. Its function is as follows. Associates with the EF-Tu.GDP complex and induces the exchange of GDP to GTP. It remains bound to the aminoacyl-tRNA.EF-Tu.GTP complex up to the GTP hydrolysis stage on the ribosome. Binds to psbD and psbA 5'-untranslated regions (UTRs) in vitro. The protein is Polyprotein of EF-Ts, chloroplastic of Oryza sativa subsp. indica (Rice).